Here is a 130-residue protein sequence, read N- to C-terminus: Small ribosomal subunit protein uS9 (130 aa).

Positions R109–R130 are disordered. Residues K111–R130 show a composition bias toward basic residues.

Belongs to the universal ribosomal protein uS9 family.

The polypeptide is Small ribosomal subunit protein uS9 (Lachnoclostridium phytofermentans (strain ATCC 700394 / DSM 18823 / ISDg) (Clostridium phytofermentans)).